A 295-amino-acid chain; its full sequence is G1/S-specific cyclin-D1 (295 aa).

The Cyclin N-terminal domain maps to 28–152 (LRAMLKTEET…LLVNKLKWNL (125 aa)). The interval 262 to 283 (AQQNVDPKATEEEGEVEEEAGL) is disordered. A Glycyl lysine isopeptide (Lys-Gly) (interchain with G-Cter in ubiquitin) cross-link involves residue lysine 269. Residue threonine 286 is modified to Phosphothreonine.

The protein belongs to the cyclin family. Cyclin D subfamily. Interacts with either CDK4 or CDK6 protein kinase to form a serine/threonine kinase holoenzyme complex. The cyclin subunit imparts substrate specificity to the complex. Component of the ternary complex CCND1/CDK4/CDKN1B required for nuclear translocation and modulation of CDK4-mediated kinase activity. Interacts directly with CDKN1B. Can form similar complexes with either CDKN1A or CDKN2A. Interacts with UHRF2; the interaction ubiquitinates CCND1 and appears to occur independently of phosphorylation. Interacts with USP2. Interacts (via cyclin N-terminal domain) with INSM1 (via N-terminal region); the interaction competes with the binding of CCND1 to CDK4 during cell cycle progression and inhibits CDK4 activity. Interacts with CDK4; the interaction is prevented with the binding of CCND1 to INSM1 during cell cycle progression. Post-translationally, phosphorylation at Thr-286 by MAP kinases is required for ubiquitination and degradation by the DCX(AMBRA1) complex. It also plays an essential role for recognition by the FBXO31 component of SCF (SKP1-cullin-F-box) protein ligase complex following DNA damage. In terms of processing, ubiquitinated at Lys-269 by the DCX(AMBRA1) complex during the transition from G1 to S cell phase, leading to its degradation: ubiquitination is dependent on Thr-286 phosphorylation. The DCX(AMBRA1) complex represents the major regulator of CCND1 stability during the G1/S transition. Also ubiquitinated by the SCF(FBXO4) and Cul7-RING(FBXW8) ubiquitin-protein ligase complexes. Following DNA damage it is ubiquitinated by the SCF(FBXO31) protein ligase complex. SCF(FBXO31) ubiquitination is dependent on Thr-286 phosphorylation. Ubiquitinated also by UHRF2 apparently in a phosphorylation-independent manner. Ubiquitination leads to its degradation and G1 arrest. Deubiquitinated by USP2; leading to its stabilization. As to expression, expressed in the intestinal epithelium.

It localises to the nucleus. The protein localises to the cytoplasm. Its subcellular location is the nucleus membrane. Regulatory component of the cyclin D1-CDK4 (DC) complex that phosphorylates and inhibits members of the retinoblastoma (RB) protein family including RB1 and regulates the cell-cycle during G(1)/S transition. Phosphorylation of RB1 allows dissociation of the transcription factor E2F from the RB/E2F complex and the subsequent transcription of E2F target genes which are responsible for the progression through the G(1) phase. Hypophosphorylates RB1 in early G(1) phase. Cyclin D-CDK4 complexes are major integrators of various mitogenenic and antimitogenic signals. Also a substrate for SMAD3, phosphorylating SMAD3 in a cell-cycle-dependent manner and repressing its transcriptional activity. Component of the ternary complex, cyclin D1/CDK4/CDKN1B, required for nuclear translocation and activity of the cyclin D-CDK4 complex. Exhibits transcriptional corepressor activity with INSM1 on the NEUROD1 and INS promoters in a cell cycle-independent manner. This Mus musculus (Mouse) protein is G1/S-specific cyclin-D1 (Ccnd1).